The following is a 152-amino-acid chain: Transcriptional regulator MraZ (152 aa).

2 SpoVT-AbrB domains span residues Ala5 to Glu52 and Ala81 to Thr124.

It belongs to the MraZ family. As to quaternary structure, forms oligomers.

It is found in the cytoplasm. The protein resides in the nucleoid. In terms of biological role, negatively regulates its own expression and that of the subsequent genes in the proximal part of the division and cell wall (dcw) gene cluster. Acts by binding directly to DNA. May also regulate the expression of genes outside the dcw cluster. This Salmonella paratyphi A (strain ATCC 9150 / SARB42) protein is Transcriptional regulator MraZ.